Here is a 334-residue protein sequence, read N- to C-terminus: Holliday junction branch migration complex subunit RuvB (334 aa).

The interval 4–184 is large ATPase domain (RuvB-L); the sequence is ADRLISAGVI…FGIVQRLEFY (181 aa). ATP contacts are provided by residues Ile23, Arg24, Gly65, Lys68, Thr69, Thr70, 131–133, Arg174, Tyr184, and Arg221; that span reads EDY. A Mg(2+)-binding site is contributed by Thr69. The tract at residues 185 to 255 is small ATPAse domain (RuvB-S); it reads QVADLEHIVS…VAMKALDMLN (71 aa). Positions 258-334 are head domain (RuvB-H); sequence AEGFDFMDRK…YKHFGITREE (77 aa). The DNA site is built by Arg294, Arg313, and Arg318.

The protein belongs to the RuvB family. As to quaternary structure, homohexamer. Forms an RuvA(8)-RuvB(12)-Holliday junction (HJ) complex. HJ DNA is sandwiched between 2 RuvA tetramers; dsDNA enters through RuvA and exits via RuvB. An RuvB hexamer assembles on each DNA strand where it exits the tetramer. Each RuvB hexamer is contacted by two RuvA subunits (via domain III) on 2 adjacent RuvB subunits; this complex drives branch migration. In the full resolvosome a probable DNA-RuvA(4)-RuvB(12)-RuvC(2) complex forms which resolves the HJ.

Its subcellular location is the cytoplasm. It catalyses the reaction ATP + H2O = ADP + phosphate + H(+). Functionally, the RuvA-RuvB-RuvC complex processes Holliday junction (HJ) DNA during genetic recombination and DNA repair, while the RuvA-RuvB complex plays an important role in the rescue of blocked DNA replication forks via replication fork reversal (RFR). RuvA specifically binds to HJ cruciform DNA, conferring on it an open structure. The RuvB hexamer acts as an ATP-dependent pump, pulling dsDNA into and through the RuvAB complex. RuvB forms 2 homohexamers on either side of HJ DNA bound by 1 or 2 RuvA tetramers; 4 subunits per hexamer contact DNA at a time. Coordinated motions by a converter formed by DNA-disengaged RuvB subunits stimulates ATP hydrolysis and nucleotide exchange. Immobilization of the converter enables RuvB to convert the ATP-contained energy into a lever motion, pulling 2 nucleotides of DNA out of the RuvA tetramer per ATP hydrolyzed, thus driving DNA branch migration. The RuvB motors rotate together with the DNA substrate, which together with the progressing nucleotide cycle form the mechanistic basis for DNA recombination by continuous HJ branch migration. Branch migration allows RuvC to scan DNA until it finds its consensus sequence, where it cleaves and resolves cruciform DNA. This is Holliday junction branch migration complex subunit RuvB from Yersinia enterocolitica serotype O:8 / biotype 1B (strain NCTC 13174 / 8081).